The sequence spans 129 residues: Ribulose bisphosphate carboxylase small subunit (129 aa).

It belongs to the RuBisCO small chain family. In terms of assembly, heterohexadecamer of 8 large and 8 small subunits.

RuBisCO catalyzes two reactions: the carboxylation of D-ribulose 1,5-bisphosphate, the primary event in carbon dioxide fixation, as well as the oxidative fragmentation of the pentose substrate. Both reactions occur simultaneously and in competition at the same active site. Although the small subunit is not catalytic it is essential for maximal activity. This chain is Ribulose bisphosphate carboxylase small subunit, found in Cereibacter sphaeroides (Rhodobacter sphaeroides).